A 204-amino-acid chain; its full sequence is MEVLPGTTVGIRVSDGVVLAAEKRVSYGLYLMSKSGKKVYRILDKMGMASAGLMADMQTLARIVEAEMRLYELDSNISPKVWTVAKLLSYILYERRLFPYYAEIVVGGLDEEGSHLYSLDPIGAIIEDDYVALGSGTQLAISIVESNYKKDMSLDEALSLALKSVYAAMKRDAASGDGVDVLVIGKSGTLEKTYPLSELQSVAV.

The propeptide at 1–6 (MEVLPG) is removed in mature form; by autocatalysis. Residue threonine 7 is the Nucleophile of the active site.

Belongs to the peptidase T1B family. In terms of assembly, the 20S proteasome core is composed of 14 alpha and 14 beta subunits that assemble into four stacked heptameric rings, resulting in a barrel-shaped structure. The two inner rings, each composed of seven catalytic beta subunits, are sandwiched by two outer rings, each composed of seven alpha subunits. The catalytic chamber with the active sites is on the inside of the barrel. Has a gated structure, the ends of the cylinder being occluded by the N-termini of the alpha-subunits. Is capped at one or both ends by the proteasome regulatory ATPase, PAN.

The protein resides in the cytoplasm. It carries out the reaction Cleavage of peptide bonds with very broad specificity.. Its activity is regulated as follows. The formation of the proteasomal ATPase PAN-20S proteasome complex, via the docking of the C-termini of PAN into the intersubunit pockets in the alpha-rings, triggers opening of the gate for substrate entry. Interconversion between the open-gate and close-gate conformations leads to a dynamic regulation of the 20S proteasome proteolysis activity. Functionally, component of the proteasome core, a large protease complex with broad specificity involved in protein degradation. This Thermofilum pendens (strain DSM 2475 / Hrk 5) protein is Proteasome subunit beta 2.